Consider the following 427-residue polypeptide: Proline--tRNA ligase (427 aa).

The protein belongs to the class-II aminoacyl-tRNA synthetase family. ProS type 2 subfamily. As to quaternary structure, homodimer.

Its subcellular location is the cytoplasm. The catalysed reaction is tRNA(Pro) + L-proline + ATP = L-prolyl-tRNA(Pro) + AMP + diphosphate. Its function is as follows. Catalyzes the attachment of proline to tRNA(Pro) in a two-step reaction: proline is first activated by ATP to form Pro-AMP and then transferred to the acceptor end of tRNA(Pro). The polypeptide is Proline--tRNA ligase (Rickettsia akari (strain Hartford)).